The sequence spans 379 residues: MGFPRILSKNNKIYTKLGEFCLSGDSFWIVCHTCQEELQTQDQFWKHIQDEHNFLHGVAKEHSRTSSYCLTDVEAAAAATTPGATASSQGAGSVTAVTVPLALYHCSAKYSDDEQREVELHEAHQQQQQQQQQQLHQQQQQQQRDAAKELAELHANAVAAAAAVAAASDGSARSSSGIDIKVEPATLALPPDMQAAAAAAAAANATIYHLPQLVPAPAPPPTASFVSASGGSTSTTVSTTPPSHQPIMQQQQHQQQQQQQQQTSTTLAMSVNQSTAIAAAALLTGPDLPKDSNSTTASAGSAVSSDDGERWYICDYESCGLKFKYKSRMELHRVVHSKERRFNCDLCSASFKQSCNLSTHRKKKHAMRGIKSELLPQRF.

The segment at 29–52 (IVCHTCQEELQTQDQFWKHIQDEH) adopts a C2H2-type 1 zinc-finger fold. The segment covering 114–124 (EQREVELHEAH) has biased composition (basic and acidic residues). Disordered stretches follow at residues 114 to 148 (EQREVELHEAHQQQQQQQQQQLHQQQQQQQRDAAK) and 221 to 267 (PTAS…STTL). Low complexity-rich tracts occupy residues 125-143 (QQQQQQQQQQLHQQQQQQQ), 223-242 (ASFVSASGGSTSTTVSTTPP), and 249-262 (QQQQHQQQQQQQQQ). C2H2-type zinc fingers lie at residues 312-336 (YICDYESCGLKFKYKSRMELHRVVH) and 342-365 (FNCDLCSASFKQSCNLSTHRKKKH).

The protein resides in the nucleus. May be a transcription factor for genes having (A+T) stretches in their promoter and/or enhancer regions. Binds to AT rich DNA. The sequence is that of AT-rich binding protein from Drosophila willistoni (Fruit fly).